The following is a 418-amino-acid chain: Histidinol dehydrogenase (418 aa).

NAD(+)-binding residues include tyrosine 119, glutamine 180, and asparagine 203. Residues threonine 226, glutamine 248, and histidine 251 each coordinate substrate. Zn(2+)-binding residues include glutamine 248 and histidine 251. Residues glutamate 316 and histidine 317 each act as proton acceptor in the active site. Histidine 317, aspartate 350, glutamate 404, and histidine 409 together coordinate substrate. Aspartate 350 serves as a coordination point for Zn(2+). Residue histidine 409 participates in Zn(2+) binding.

The protein belongs to the histidinol dehydrogenase family. It depends on Zn(2+) as a cofactor.

It carries out the reaction L-histidinol + 2 NAD(+) + H2O = L-histidine + 2 NADH + 3 H(+). It functions in the pathway amino-acid biosynthesis; L-histidine biosynthesis; L-histidine from 5-phospho-alpha-D-ribose 1-diphosphate: step 9/9. Catalyzes the sequential NAD-dependent oxidations of L-histidinol to L-histidinaldehyde and then to L-histidine. This Staphylococcus aureus (strain MSSA476) protein is Histidinol dehydrogenase.